A 289-amino-acid polypeptide reads, in one-letter code: Lipoyl synthase (289 aa).

[4Fe-4S] cluster contacts are provided by Cys-33, Cys-38, Cys-44, Cys-59, Cys-63, Cys-66, and Ser-274. The Radical SAM core domain maps to 45–263; that stretch reads FAGGTATFLI…SQGESELGFL (219 aa).

It belongs to the radical SAM superfamily. Lipoyl synthase family. It depends on [4Fe-4S] cluster as a cofactor.

The protein resides in the cytoplasm. It catalyses the reaction [[Fe-S] cluster scaffold protein carrying a second [4Fe-4S](2+) cluster] + N(6)-octanoyl-L-lysyl-[protein] + 2 oxidized [2Fe-2S]-[ferredoxin] + 2 S-adenosyl-L-methionine + 4 H(+) = [[Fe-S] cluster scaffold protein] + N(6)-[(R)-dihydrolipoyl]-L-lysyl-[protein] + 4 Fe(3+) + 2 hydrogen sulfide + 2 5'-deoxyadenosine + 2 L-methionine + 2 reduced [2Fe-2S]-[ferredoxin]. The protein operates within protein modification; protein lipoylation via endogenous pathway; protein N(6)-(lipoyl)lysine from octanoyl-[acyl-carrier-protein]: step 2/2. Functionally, catalyzes the radical-mediated insertion of two sulfur atoms into the C-6 and C-8 positions of the octanoyl moiety bound to the lipoyl domains of lipoate-dependent enzymes, thereby converting the octanoylated domains into lipoylated derivatives. The protein is Lipoyl synthase of Synechococcus sp. (strain RCC307).